A 340-amino-acid chain; its full sequence is MKNILDLKYEELVNEFQRIGLEKYRVDQVLNWIYKKKVFEFEKMTNLSKEHRKLLSEKFFIDLPKLLDMQISKIDKTTKFLWELRDGNTIESVALFHSGRVTACISTQVGCPVKCEFCATGQSGFVRNLTVGEIVSQILAIELNRKIKVGNVVYMGMGEPLLNFENVIDSIKMLNDKKMLNIGIRRITVSTVGIPEKIIALAESGLNVKLALSLHAVTDYKRDQIIPLNKKYSVEELIYSLRKYQEITGNRVTIEYILIREFNDYPEDAIRLVELLRGLSVYVNLIPINPVNPKFHRPNRWALERFKEILEKNGIECEIRKEKGTDIDAACGQLRRRKLR.

The active-site Proton acceptor is glutamate 91. The 230-residue stretch at 97–326 folds into the Radical SAM core domain; the sequence is HSGRVTACIS…CEIRKEKGTD (230 aa). Residues cysteine 104 and cysteine 331 are joined by a disulfide bond. [4Fe-4S] cluster contacts are provided by cysteine 111, cysteine 115, and cysteine 118. S-adenosyl-L-methionine contacts are provided by residues 158–159, serine 190, 213–215, and asparagine 289; these read GE and SLH. Residue cysteine 331 is the S-methylcysteine intermediate of the active site.

It belongs to the radical SAM superfamily. RlmN family. The cofactor is [4Fe-4S] cluster.

The protein resides in the cytoplasm. The enzyme catalyses adenosine(2503) in 23S rRNA + 2 reduced [2Fe-2S]-[ferredoxin] + 2 S-adenosyl-L-methionine = 2-methyladenosine(2503) in 23S rRNA + 5'-deoxyadenosine + L-methionine + 2 oxidized [2Fe-2S]-[ferredoxin] + S-adenosyl-L-homocysteine. It carries out the reaction adenosine(37) in tRNA + 2 reduced [2Fe-2S]-[ferredoxin] + 2 S-adenosyl-L-methionine = 2-methyladenosine(37) in tRNA + 5'-deoxyadenosine + L-methionine + 2 oxidized [2Fe-2S]-[ferredoxin] + S-adenosyl-L-homocysteine. Its function is as follows. Specifically methylates position 2 of adenine 2503 in 23S rRNA and position 2 of adenine 37 in tRNAs. The sequence is that of Probable dual-specificity RNA methyltransferase RlmN from Thermosipho melanesiensis (strain DSM 12029 / CIP 104789 / BI429).